A 387-amino-acid chain; its full sequence is Low specificity L-threonine aldolase (387 aa).

At Lys213 the chain carries N6-(pyridoxal phosphate)lysine. A Glycyl lysine isopeptide (Lys-Gly) (interchain with G-Cter in ubiquitin) cross-link involves residue Lys228. Phosphoserine occurs at positions 367 and 369. Thr370 bears the Phosphothreonine mark.

It belongs to the threonine aldolase family. Homotetramer. It depends on pyridoxal 5'-phosphate as a cofactor.

It carries out the reaction L-threonine = acetaldehyde + glycine. The enzyme catalyses L-allo-threonine = acetaldehyde + glycine. It participates in amino-acid biosynthesis; glycine biosynthesis; glycine from L-allo-threonine: step 1/1. It functions in the pathway amino-acid degradation; L-threonine degradation via aldolase pathway; acetaldehyde and glycine from L-threonine: step 1/1. Catalyzes the cleavage of L-allo-threonine and L-threonine to glycine and acetaldehyde. The chain is Low specificity L-threonine aldolase (GLY1) from Saccharomyces cerevisiae (strain ATCC 204508 / S288c) (Baker's yeast).